Reading from the N-terminus, the 214-residue chain is External core antigen (214 aa).

An N-terminal signal peptide occupies residues 1–19 (MQLFHLCLIISCTCPTIQA). The interval 25-27 (GWL) is HBEAG. The tract at residues 165–214 (NAPILSTLPETTVVRRRDRGRSPRRRTPSPRRRRSQSPRRRRSQSRESQC) is disordered. Residues 178 to 207 (VRRRDRGRSPRRRTPSPRRRRSQSPRRRRS) show a composition bias toward basic residues. One copy of the 1; half-length repeat lies at 186-192 (SPRRRTP). Residues 186–208 (SPRRRTPSPRRRRSQSPRRRRSQ) are 3 X 8 AA repeats of S-P-R-R-R-R-S-Q. A propeptide spanning residues 186–214 (SPRRRTPSPRRRRSQSPRRRRSQSRESQC) is cleaved from the precursor. 2 tandem repeats follow at residues 193–200 (SPRRRRSQ) and 201–208 (SPRRRRSQ).

The protein belongs to the orthohepadnavirus precore antigen family. As to quaternary structure, homodimerizes. Phosphorylated. Post-translationally, cleaved by host furin.

The protein resides in the secreted. Its subcellular location is the host nucleus. Its function is as follows. May regulate immune response to the intracellular capsid in acting as a T-cell tolerogen, by having an immunoregulatory effect which prevents destruction of infected cells by cytotoxic T-cells. This immune regulation may predispose to chronicity during perinatal infections and prevent severe liver injury during adult infections. The protein is External core antigen of Homo sapiens (Human).